We begin with the raw amino-acid sequence, 892 residues long: Putative VWFA domain-containing protein ORF892 (892 aa).

Residues 109-548 form a disordered region; it reads EEQLQRRPQR…RGYAHGDEDL (440 aa). The segment covering 129–142 has biased composition (polar residues); that stretch reads SEVANQRVSRSAEN. Positions 143–162 are enriched in basic and acidic residues; it reads QGKRGNEEKQQQKTPGKTEE. Over residues 169-184 the composition is skewed to acidic residues; it reads ESGEEGNQQEESGEEQ. A compositionally biased stretch (basic and acidic residues) spans 185 to 196; sequence EGVKGSRSKQRE. Positions 212-223 are enriched in acidic residues; the sequence is ESGESESEEGQS. Low complexity-rich tracts occupy residues 224–238 and 271–283; these read SEETQLSSSGEGNQQ and GNGQESSGEAQNG. The segment covering 287 to 300 has biased composition (acidic residues); the sequence is GESEGEITESESAS. A compositionally biased stretch (low complexity) spans 301 to 323; that stretch reads EEQTGSKGKSGQQGEEGQQQSGS. Acidic residues-rich tracts occupy residues 324-336 and 425-448; these read EGEEGAEQEESGE and SESEEGQSPEETQEGGEGGAETEE. The segment covering 453-466 has biased composition (low complexity); sequence SEAEGTAAEGEVGQ. Polar residues-rich tracts occupy residues 467–481 and 512–531; these read PSEQGVSSSTGSGQR and QTGSSSESAGSEQLGSQQGE. Residues 536–546 show a composition bias toward basic and acidic residues; the sequence is EGGRGYAHGDE. A coiled-coil region spans residues 553 to 620; sequence QEINSILQTL…VQKLLKDLNV (68 aa). In terms of domain architecture, VWFA spans 723–892; that stretch reads DFLFVIDSSG…GNIVLKRLVH (170 aa).

The polypeptide is Putative VWFA domain-containing protein ORF892 (Acidianus two-tailed virus (ATV)).